We begin with the raw amino-acid sequence, 309 residues long: Dihydroorotate dehydrogenase B (NAD(+)), catalytic subunit (309 aa).

Residues S21 and K45–A46 each bind FMN. Substrate-binding positions include K45 and N69 to L73. 2 residues coordinate FMN: N99 and N127. N127 contributes to the substrate binding site. C130 functions as the Nucleophile in the catalytic mechanism. 2 residues coordinate FMN: K165 and I191. Residue N192–T193 coordinates substrate. Residues G217, G243–G244, and G265–T266 each bind FMN.

It belongs to the dihydroorotate dehydrogenase family. Type 1 subfamily. In terms of assembly, heterotetramer of 2 PyrK and 2 PyrD type B subunits. FMN is required as a cofactor.

The protein resides in the cytoplasm. It carries out the reaction (S)-dihydroorotate + NAD(+) = orotate + NADH + H(+). It participates in pyrimidine metabolism; UMP biosynthesis via de novo pathway; orotate from (S)-dihydroorotate (NAD(+) route): step 1/1. In terms of biological role, catalyzes the conversion of dihydroorotate to orotate with NAD(+) as electron acceptor. In Exiguobacterium sibiricum (strain DSM 17290 / CCUG 55495 / CIP 109462 / JCM 13490 / 255-15), this protein is Dihydroorotate dehydrogenase B (NAD(+)), catalytic subunit (pyrD).